The following is a 115-amino-acid chain: Meromycolate extension acyl carrier protein (115 aa).

One can recognise a Carrier domain in the interval 3 to 81 (VTQEEIIAGI…DVVTYIQKLE (79 aa)). S41 bears the O-(pantetheine 4'-phosphoryl)serine mark.

The protein belongs to the acyl carrier protein (ACP) family. 4'-phosphopantetheine is transferred from CoA to a specific serine of apo-AcpM.

Its subcellular location is the cytoplasm. In terms of biological role, acyl carrier protein involved in meromycolate extension. This is Meromycolate extension acyl carrier protein (acpM) from Mycobacterium leprae (strain TN).